The chain runs to 121 residues: Holo-[acyl-carrier-protein] synthase (121 aa).

Asp-6 and Glu-55 together coordinate Mg(2+).

It belongs to the P-Pant transferase superfamily. AcpS family. It depends on Mg(2+) as a cofactor.

The protein localises to the cytoplasm. It catalyses the reaction apo-[ACP] + CoA = holo-[ACP] + adenosine 3',5'-bisphosphate + H(+). In terms of biological role, transfers the 4'-phosphopantetheine moiety from coenzyme A to a Ser of acyl-carrier-protein. In Chloroherpeton thalassium (strain ATCC 35110 / GB-78), this protein is Holo-[acyl-carrier-protein] synthase.